The chain runs to 367 residues: Aminomethyltransferase (367 aa).

Belongs to the GcvT family. In terms of assembly, the glycine cleavage system is composed of four proteins: P, T, L and H.

It catalyses the reaction N(6)-[(R)-S(8)-aminomethyldihydrolipoyl]-L-lysyl-[protein] + (6S)-5,6,7,8-tetrahydrofolate = N(6)-[(R)-dihydrolipoyl]-L-lysyl-[protein] + (6R)-5,10-methylene-5,6,7,8-tetrahydrofolate + NH4(+). Its function is as follows. The glycine cleavage system catalyzes the degradation of glycine. This is Aminomethyltransferase from Mycobacterium avium (strain 104).